We begin with the raw amino-acid sequence, 185 residues long: Ribosome-recycling factor (185 aa).

Belongs to the RRF family.

It is found in the cytoplasm. Its function is as follows. Responsible for the release of ribosomes from messenger RNA at the termination of protein biosynthesis. May increase the efficiency of translation by recycling ribosomes from one round of translation to another. This is Ribosome-recycling factor from Thermobifida fusca (strain YX).